Consider the following 397-residue polypeptide: Ribosomal RNA large subunit methyltransferase I (397 aa).

The PUA domain maps to 2 to 79 (SASIYLVKGR…KEETVDLDFF (78 aa)).

This sequence belongs to the methyltransferase superfamily. RlmI family.

The protein resides in the cytoplasm. It carries out the reaction cytidine(1962) in 23S rRNA + S-adenosyl-L-methionine = 5-methylcytidine(1962) in 23S rRNA + S-adenosyl-L-homocysteine + H(+). Specifically methylates the cytosine at position 1962 (m5C1962) of 23S rRNA. The sequence is that of Ribosomal RNA large subunit methyltransferase I from Aeromonas hydrophila subsp. hydrophila (strain ATCC 7966 / DSM 30187 / BCRC 13018 / CCUG 14551 / JCM 1027 / KCTC 2358 / NCIMB 9240 / NCTC 8049).